Here is a 443-residue protein sequence, read N- to C-terminus: MPYTPHTPEEIRQMLDVIGVKSIDDLFAEIPPEMQPRSFDIPEGMSEMEVCARIQRMAAKNRIDLVSYLGAGFYDHHIPKAVDNLVSRGEFYTAYTPYQPEASQGTLQAIFEYQTAVCRLMEMEVANASVYDGGSAIFEAMMMAARATRRSKLVIDEALSPIYRTMLASYTSNLNMELVTVAHNEGRSDKQALMDAVDDKCAAVVVQNPNFFGAVDDFTELFTHARSCNALGVISVYPVMQSVLKTPGEMGADIAVADGQSLGMPLSFGGPYLGIMTCTKKLARQIPGRIAGRTKDVDGKTGYVLTLQAREQHIRRAKATSNICSNQALCALRAIIHMCLTGPEGLVRTAELSMERAHYAADRLTALPGVSLLHDAPFCNEFALRLPVSAYDVVDRLVNHGVVPGFPLGGYYAGMDDVLLVACTEKHSFEQIGIMAELVGGML.

The protein belongs to the GcvP family. N-terminal subunit subfamily. As to quaternary structure, the glycine cleavage system is composed of four proteins: P, T, L and H. In this organism, the P 'protein' is a heterodimer of two subunits.

It catalyses the reaction N(6)-[(R)-lipoyl]-L-lysyl-[glycine-cleavage complex H protein] + glycine + H(+) = N(6)-[(R)-S(8)-aminomethyldihydrolipoyl]-L-lysyl-[glycine-cleavage complex H protein] + CO2. Functionally, the glycine cleavage system catalyzes the degradation of glycine. The P protein binds the alpha-amino group of glycine through its pyridoxal phosphate cofactor; CO(2) is released and the remaining methylamine moiety is then transferred to the lipoamide cofactor of the H protein. The polypeptide is Probable glycine dehydrogenase (decarboxylating) subunit 1 (Oleidesulfovibrio alaskensis (strain ATCC BAA-1058 / DSM 17464 / G20) (Desulfovibrio alaskensis)).